Here is a 423-residue protein sequence, read N- to C-terminus: Glucoside xylosyltransferase 2 (423 aa).

The Cytoplasmic segment spans residues 1–6; sequence MRFRWK. The chain crosses the membrane as a helical; Signal-anchor for type II membrane protein span at residues 7 to 26; the sequence is FFGSLLCVTGLLLVLYRQLG. The Lumenal portion of the chain corresponds to 27–423; it reads NVPQPPPGPA…RVVVHIRSDV (397 aa). Residues 60-85 are disordered; that stretch reads RRDARQGGKKKTNWNNVRAPEQKPNP. N-linked (GlcNAc...) asparagine glycans are attached at residues Asn215 and Asn256.

This sequence belongs to the glycosyltransferase 8 family.

It localises to the membrane. The catalysed reaction is 3-O-(beta-D-glucosyl)-L-seryl-[EGF-like domain protein] + UDP-alpha-D-xylose = 3-O-[alpha-D-xylosyl-(1-&gt;3)-beta-D-glucosyl]-L-seryl-[EGF-like domain protein] + UDP + H(+). Functionally, glycosyltransferase which elongates the O-linked glucose attached to EGF-like repeats in the extracellular domain of Notch proteins by catalyzing the addition of xylose. The chain is Glucoside xylosyltransferase 2 (gxylt2) from Xenopus laevis (African clawed frog).